The chain runs to 304 residues: Protoheme IX farnesyltransferase 2 (304 aa).

9 helical membrane passes run 28 to 48 (VVALMLITAVVGMSLAPVVDF), 50 to 70 (WLQAAFGLVGIGLMAGSAAAF), 98 to 118 (ISVAIFSTALGVIGFVLLYAL), 122 to 142 (LTAWMTFLSLLGYAVVYTMYL), 150 to 170 (IVIAGIAGAMPPLLGWTAVTG), 176 to 196 (AWLLVMIIFIWTPPHFWAIAI), 223 to 243 (ILLYTILLTLVCILPVLVGMV), 245 to 265 (SVYLFSSLLLNAGFMYHAWKL), and 282 to 302 (IYHLLALFVALLADHYLGLFF).

Belongs to the UbiA prenyltransferase family. Protoheme IX farnesyltransferase subfamily.

The protein resides in the cell inner membrane. It catalyses the reaction heme b + (2E,6E)-farnesyl diphosphate + H2O = Fe(II)-heme o + diphosphate. It participates in porphyrin-containing compound metabolism; heme O biosynthesis; heme O from protoheme: step 1/1. Its function is as follows. Converts heme B (protoheme IX) to heme O by substitution of the vinyl group on carbon 2 of heme B porphyrin ring with a hydroxyethyl farnesyl side group. In Vibrio campbellii (strain ATCC BAA-1116), this protein is Protoheme IX farnesyltransferase 2.